A 253-amino-acid chain; its full sequence is Imidazole glycerol phosphate synthase subunit HisF (253 aa).

Residues D11 and D130 contribute to the active site.

Belongs to the HisA/HisF family. In terms of assembly, heterodimer of HisH and HisF.

It is found in the cytoplasm. It carries out the reaction 5-[(5-phospho-1-deoxy-D-ribulos-1-ylimino)methylamino]-1-(5-phospho-beta-D-ribosyl)imidazole-4-carboxamide + L-glutamine = D-erythro-1-(imidazol-4-yl)glycerol 3-phosphate + 5-amino-1-(5-phospho-beta-D-ribosyl)imidazole-4-carboxamide + L-glutamate + H(+). It functions in the pathway amino-acid biosynthesis; L-histidine biosynthesis; L-histidine from 5-phospho-alpha-D-ribose 1-diphosphate: step 5/9. In terms of biological role, IGPS catalyzes the conversion of PRFAR and glutamine to IGP, AICAR and glutamate. The HisF subunit catalyzes the cyclization activity that produces IGP and AICAR from PRFAR using the ammonia provided by the HisH subunit. The polypeptide is Imidazole glycerol phosphate synthase subunit HisF (Geobacter sulfurreducens (strain ATCC 51573 / DSM 12127 / PCA)).